The primary structure comprises 231 residues: Aldehyde decarbonylase (231 aa).

Fe cation contacts are provided by glutamate 32, glutamate 60, histidine 63, glutamate 115, and histidine 147.

It belongs to the aldehyde decarbonylase family. Binds 2 metal cations per subunit. The catalytic dinuclear metal-binding site could be either a di-iron or a manganese-iron cofactor. is required as a cofactor.

The enzyme catalyses a long-chain fatty aldehyde + 2 NADPH + O2 + H(+) = a long-chain alkane + formate + 2 NADP(+) + H2O. Catalyzes the decarbonylation of fatty aldehydes to alkanes. Requires the presence of ferredoxin, ferredoxin reductase and NADPH for in vitro decarbonylase activity. Involved in the biosynthesis of alkanes, mainly heptadecane and pentadecane. This chain is Aldehyde decarbonylase, found in Synechococcus elongatus (strain ATCC 33912 / PCC 7942 / FACHB-805) (Anacystis nidulans R2).